The sequence spans 88 residues: Small ribosomal subunit protein bS16c (88 aa).

This sequence belongs to the bacterial ribosomal protein bS16 family.

It is found in the plastid. The protein localises to the chloroplast. This chain is Small ribosomal subunit protein bS16c, found in Calycanthus floridus var. glaucus (Eastern sweetshrub).